Reading from the N-terminus, the 432-residue chain is RNA binding protein fox-1 homolog 2 (432 aa).

A compositionally biased stretch (low complexity) spans methionine 1–arginine 21. The segment at methionine 1–asparagine 169 is disordered. Composition is skewed to polar residues over residues glutamine 60–proline 69 and tyrosine 101–glutamate 121. Residues glutamine 122–lysine 159 show a composition bias toward low complexity. Positions lysine 163–alanine 239 constitute an RRM domain. Arginine 323 carries the post-translational modification Omega-N-methylarginine. Arginine 339 and arginine 371 each carry asymmetric dimethylarginine. Asymmetric dimethylarginine; alternate occurs at positions 423 and 428. An omega-N-methylarginine; alternate mark is found at arginine 423 and arginine 428.

Interacts with ER-alpha N-terminal activation domain. Interacts with RBPMS; the interaction allows cooperative assembly of stable cell-specific alternative splicing regulatory complexes.

It is found in the nucleus. The protein localises to the cytoplasm. In terms of biological role, RNA-binding protein that regulates alternative splicing events by binding to 5'-UGCAUGU-3' elements. Prevents binding of U2AF2 to the 3'-splice site. Regulates alternative splicing of tissue-specific exons and of differentially spliced exons during erythropoiesis. Seems to act as a coregulatory factor of ER-alpha. Together with RNA binding proteins RBPMS and MBNL1/2, activates vascular smooth muscle cells alternative splicing events. This chain is RNA binding protein fox-1 homolog 2 (Rbfox2), found in Rattus norvegicus (Rat).